The primary structure comprises 138 residues: Large ribosomal subunit protein uL14 (138 aa).

Belongs to the universal ribosomal protein uL14 family. In terms of assembly, part of the 50S ribosomal subunit. Forms a cluster with proteins L3 and L24e, part of which may contact the 16S rRNA in 2 intersubunit bridges. Contacts initiation factor aIF-6.

It localises to the cytoplasm. In terms of biological role, binds to 23S rRNA. Forms part of two intersubunit bridges in the 70S ribosome. In Saccharolobus solfataricus (strain ATCC 35092 / DSM 1617 / JCM 11322 / P2) (Sulfolobus solfataricus), this protein is Large ribosomal subunit protein uL14.